Reading from the N-terminus, the 363-residue chain is Mitogen-activated protein kinase 4 (363 aa).

A Protein kinase domain is found at 30–318 (YDLVKVVGFG…AKQVMEHPYF (289 aa)). Residues 36–44 (VGFGACGTV) and Lys-59 contribute to the ATP site. The active-site Proton acceptor is the Asp-156. Phosphoserine is present on residues Ser-186 and Ser-187. Thr-190 is modified (phosphothreonine; by MKK5). The TQY motif lies at 190–192 (TQY). Tyr-192 bears the Phosphotyrosine; by MKK5 mark.

Belongs to the protein kinase superfamily. CMGC Ser/Thr protein kinase family. MAP kinase subfamily. The cofactor is Mg(2+). Post-translationally, dually phosphorylated on Thr-190 and Tyr-192, which activates the enzyme.

The enzyme catalyses L-seryl-[protein] + ATP = O-phospho-L-seryl-[protein] + ADP + H(+). The catalysed reaction is L-threonyl-[protein] + ATP = O-phospho-L-threonyl-[protein] + ADP + H(+). Essential for the two main proliferating life stages, the promastigotes and amastigotes, of the parasite. The chain is Mitogen-activated protein kinase 4 from Leishmania mexicana.